A 337-amino-acid polypeptide reads, in one-letter code: Mating-type protein MAT-2 (337 aa).

Positions 125–193 form a DNA-binding region, HMG box; that stretch reads APRPMNCWII…EHLRQHPNYK (69 aa). The tract at residues 171–219 is disordered; sequence KRPWQDAAQSAKEEHLRQHPNYKYTPRKPGEKKKRQSRKSKRAAATTTA. The segment covering 200 to 212 has biased composition (basic residues); the sequence is GEKKKRQSRKSKR.

The protein resides in the nucleus. This chain is Mating-type protein MAT-2 (MAT2), found in Cochliobolus sativus (Common root rot and spot blotch fungus).